Here is a 907-residue protein sequence, read N- to C-terminus: Epidermal growth factor receptor substrate 15-like 1 (907 aa).

An N-acetylalanine modification is found at A2. The EH 1 domain maps to 15 to 104 (GNPLYESYYK…SLTMPPPKFH (90 aa)). The interaction with DAB2 stretch occupies residues 15 to 368 (GNPLYESYYK…PSERGTPIPD (354 aa)). In terms of domain architecture, EF-hand 1 spans 48 to 83 (LSDIILGKIWDLADPEGKGFLDKQGFYVALRLVACA). A Phosphotyrosine modification is found at Y74. Phosphoserine is present on residues S107 and S108. The EH 2 domain maps to 127–215 (EKAKFDGIFE…PPLIPPSKRK (89 aa)). Positions 159–194 (LPLDVLGRVWDLSDIDKDGHLDRDEFAVAMHLVYRA) constitute an EF-hand 2 domain. Residues D172, D174, D176, H178, and E183 each coordinate Ca(2+). A phosphoserine mark is found at S229, S244, S253, S255, and S259. The tract at residues 229-260 (SPPPKDSLRSTPSHGSVSSLNSTGSLSPKHSV) is disordered. Over residues 241–255 (SHGSVSSLNSTGSLS) the composition is skewed to low complexity. EF-hand domains follow at residues 272 to 307 (ADKMRFDEIFLKTDLDLDGYVSGQEVKEIFMHSGLT) and 308 to 341 (QNLLAHIWALADTRQTGKLSKEQFALAMYFIQQK). Positions 273–363 (DKMRFDEIFL…PDMVPPSERG (91 aa)) constitute an EH 3 domain. S360 is subject to Phosphoserine. Phosphothreonine is present on T364. Phosphoserine is present on residues S369 and S375. The stretch at 384–551 (LDDISQEIAQ…RSKLSQLQES (168 aa)) forms a coiled coil. S558 is subject to Phosphoserine. Residue Y562 is modified to Phosphotyrosine. Residue S610 is modified to Phosphoserine. The segment at 611–860 (QELHPDPFQA…SSSGFADFTS (250 aa)) is disordered. Over residues 622–636 (DPFKSDPFKGADPFK) the composition is skewed to basic and acidic residues. Positions 643 to 652 (DPFSEQQTAA) are enriched in polar residues. Phosphoserine is present on residues S664, S670, S695, S715, and S732. The segment covering 682-696 (NDPFTSDPFTKNPSL) has biased composition (polar residues). Positions 703–743 (FESSDPFSSSSISSKGSDPFGTLDPFGSSSFSSAEGFADFS) are enriched in low complexity. A compositionally biased stretch (pro residues) spans 776–790 (ALPPKKPAPPRPKPP). The residue at position 791 (S791) is a Phosphoserine. Positions 791–802 (SGQSTPVSQLGS) are enriched in polar residues. T795 bears the Phosphothreonine mark. Positions 840–853 (APSSSAKPPKTSSS) are enriched in low complexity. UIM domains follow at residues 863-882 (NEEQQLAWAKRESEKAEQER) and 889-907 (QEQEDLELAIALSKADMPA).

As to quaternary structure, interacts with EPS15, AGFG1/HRB and AGFG2/HRBL. Associates with the clathrin-associated adapter protein complex 2 (AP-2). Interacts with FCHO1. Interacts with FCHO2. Interacts (via EH domains) with DAB2. Interacts with UBQLN1 (via ubiquitin-like domain). Interacts with CAVIN3 (via leucine-zipper domain). Interacts with REPS2. In terms of processing, phosphorylated on tyrosine residues by EGFR.

It is found in the cell membrane. It localises to the nucleus. The protein localises to the membrane. Its subcellular location is the coated pit. Seems to be a constitutive component of clathrin-coated pits that is required for receptor-mediated endocytosis. Involved in endocytosis of integrin beta-1 (ITGB1) and transferrin receptor (TFR); internalization of ITGB1 as DAB2-dependent cargo but not TFR seems to require association with DAB2. The sequence is that of Epidermal growth factor receptor substrate 15-like 1 (Eps15l1) from Mus musculus (Mouse).